Consider the following 385-residue polypeptide: DNA replication and repair protein RecF (385 aa).

ATP is bound at residue 30–37 (GPNGNGKT).

This sequence belongs to the RecF family.

The protein localises to the cytoplasm. In terms of biological role, the RecF protein is involved in DNA metabolism; it is required for DNA replication and normal SOS inducibility. RecF binds preferentially to single-stranded, linear DNA. It also seems to bind ATP. The polypeptide is DNA replication and repair protein RecF (Mycobacterium leprae (strain Br4923)).